Consider the following 2542-residue polypeptide: Talin-2 (2542 aa).

The 319-residue stretch at 88-406 (RPQKIRMLDG…GYIDIILKKK (319 aa)) folds into the FERM domain. Positions 312–406 (GVSFFLVKEK…GYIDIILKKK (95 aa)) are interaction with PIP5K1C. Ser428, Ser449, Ser623, and Ser1023 each carry phosphoserine. Position 1665 is a phosphotyrosine (Tyr1665). The residue at position 1843 (Thr1843) is a Phosphothreonine. The 240-residue stretch at 2294-2533 (TEWVDPEDPT…QIRQQQYKFL (240 aa)) folds into the I/LWEQ domain.

In terms of assembly, interacts directly with PIP5K1C.

Its subcellular location is the cytoplasm. The protein localises to the cell junction. It is found in the focal adhesion. The protein resides in the synapse. It localises to the cell membrane. Its subcellular location is the cytoskeleton. In terms of biological role, as a major component of focal adhesion plaques that links integrin to the actin cytoskeleton, may play an important role in cell adhesion. Recruits PIP5K1C to focal adhesion plaques and strongly activates its kinase activity. The protein is Talin-2 (TLN2) of Homo sapiens (Human).